We begin with the raw amino-acid sequence, 89 residues long: Small ribosomal subunit protein uS15 (89 aa).

This sequence belongs to the universal ribosomal protein uS15 family. In terms of assembly, part of the 30S ribosomal subunit. Forms a bridge to the 50S subunit in the 70S ribosome, contacting the 23S rRNA.

Its function is as follows. One of the primary rRNA binding proteins, it binds directly to 16S rRNA where it helps nucleate assembly of the platform of the 30S subunit by binding and bridging several RNA helices of the 16S rRNA. In terms of biological role, forms an intersubunit bridge (bridge B4) with the 23S rRNA of the 50S subunit in the ribosome. The polypeptide is Small ribosomal subunit protein uS15 (Brucella abortus (strain S19)).